The primary structure comprises 62 residues: Ferredoxin-1 (62 aa).

2 4Fe-4S ferredoxin-type domains span residues 2–28 and 29–62; these read ALYI…SAGS and EIYV…IVQG. Residues Cys-9, Cys-12, Cys-15, Cys-19, Cys-38, Cys-41, Cys-50, and Cys-54 each contribute to the [4Fe-4S] cluster site.

It depends on [4Fe-4S] cluster as a cofactor.

In terms of biological role, ferredoxins are iron-sulfur proteins that transfer electrons in a wide variety of metabolic reactions. The polypeptide is Ferredoxin-1 (Chlorobaculum tepidum (strain ATCC 49652 / DSM 12025 / NBRC 103806 / TLS) (Chlorobium tepidum)).